The chain runs to 116 residues: Large ribosomal subunit protein uL18 (116 aa).

This sequence belongs to the universal ribosomal protein uL18 family. Part of the 50S ribosomal subunit; part of the 5S rRNA/L5/L18/L25 subcomplex. Contacts the 5S and 23S rRNAs.

Its function is as follows. This is one of the proteins that bind and probably mediate the attachment of the 5S RNA into the large ribosomal subunit, where it forms part of the central protuberance. The polypeptide is Large ribosomal subunit protein uL18 (Psychrobacter arcticus (strain DSM 17307 / VKM B-2377 / 273-4)).